The sequence spans 97 residues: YcgL domain-containing protein PA14_47450 (97 aa).

The region spanning Arg3–Pro87 is the YcgL domain.

This chain is YcgL domain-containing protein PA14_47450, found in Pseudomonas aeruginosa (strain UCBPP-PA14).